The chain runs to 139 residues: Large ribosomal subunit protein uL16c (139 aa).

It belongs to the universal ribosomal protein uL16 family. In terms of assembly, part of the 50S ribosomal subunit.

It is found in the plastid. The protein localises to the chloroplast. This Cicer arietinum (Chickpea) protein is Large ribosomal subunit protein uL16c.